We begin with the raw amino-acid sequence, 188 residues long: GTPase KRas (188 aa).

At M1 the chain carries N-acetylmethionine. T2 is modified (N-acetylthreonine; in GTPase KRas, N-terminally processed). GTP-binding positions include 10–18 (GAGGVGKSA), 29–35 (VDEYDPT), and 59–60 (AG). An Effector region motif is present at residues 32 to 40 (YDPTIEDSY). K104 carries the post-translational modification N6-acetyllysine. GTP is bound at residue 116–119 (NKCD). The interval 166–185 (HKEKMSKDGKKKKKKSKTKC) is hypervariable region. The segment at 167-188 (KEKMSKDGKKKKKKSKTKCIIM) is disordered. C185 carries the cysteine methyl ester modification. The S-farnesyl cysteine moiety is linked to residue C185. Positions 186–188 (IIM) are cleaved as a propeptide — removed in mature form.

The protein belongs to the small GTPase superfamily. Ras family. In terms of assembly, interacts with PHLPP. Interacts (active GTP-bound form preferentially) with RGS14. Interacts (when farnesylated) with PDE6D; this promotes dissociation from the cell membrane. Interacts with SOS1. Interacts (when farnesylated) with GPR31. Interacts with RAP1GDS1. Interacts (active GTP-bound form) with both SHOC2 and PP1c (all isoforms) to form a tertiary complex; SHOC2 and PP1c preferably bind M-Ras/MRAS, but they also bind K-Ras/KRAS, N-Ras/NRAS and H-Ras/HRAS. Interacts (GTP-bound form) with MAPKAP1/SIN1; inhibiting K-Ras/KRAS activity. Acetylation at Lys-104 prevents interaction with guanine nucleotide exchange factors (GEFs).

It is found in the cell membrane. It localises to the cytoplasm. The protein resides in the cytosol. The catalysed reaction is GTP + H2O = GDP + phosphate + H(+). Alternates between an inactive form bound to GDP and an active form bound to GTP. Activated by a guanine nucleotide-exchange factor (GEF) and inactivated by a GTPase-activating protein (GAP). Interaction with SOS1 promotes exchange of bound GDP to GTP. Its function is as follows. Ras proteins bind GDP/GTP and possess intrinsic GTPase activity. Plays an important role in the regulation of cell proliferation. Plays a role in promoting oncogenic events by inducing transcriptional silencing of tumor suppressor genes (TSGs) in colorectal cancer (CRC) cells in a ZNF304-dependent manner. The chain is GTPase KRas (KRAS) from Monodelphis domestica (Gray short-tailed opossum).